We begin with the raw amino-acid sequence, 152 residues long: Transcriptional regulator MraZ (152 aa).

2 SpoVT-AbrB domains span residues 5-52 (VTSI…PLHE) and 81-124 (ATEC…QDKQ).

This sequence belongs to the MraZ family. In terms of assembly, forms oligomers.

It is found in the cytoplasm. It localises to the nucleoid. The chain is Transcriptional regulator MraZ from Actinobacillus pleuropneumoniae serotype 5b (strain L20).